A 518-amino-acid polypeptide reads, in one-letter code: GMP synthase [glutamine-hydrolyzing] (518 aa).

The 191-residue stretch at 13-203 (KIIVLDFGSQ…ALNICGCKGD (191 aa)) folds into the Glutamine amidotransferase type-1 domain. Residue cysteine 90 is the Nucleophile of the active site. Residues histidine 177 and glutamate 179 contribute to the active site. The GMPS ATP-PPase domain occupies 204-393 (WTMENFSEVE…LGMPDAIVWR (190 aa)). 231–237 (SGGVDSS) is a binding site for ATP.

As to quaternary structure, homodimer.

The enzyme catalyses XMP + L-glutamine + ATP + H2O = GMP + L-glutamate + AMP + diphosphate + 2 H(+). It participates in purine metabolism; GMP biosynthesis; GMP from XMP (L-Gln route): step 1/1. In terms of biological role, catalyzes the synthesis of GMP from XMP. The polypeptide is GMP synthase [glutamine-hydrolyzing] (Listeria innocua serovar 6a (strain ATCC BAA-680 / CLIP 11262)).